A 646-amino-acid polypeptide reads, in one-letter code: Threonine--tRNA ligase (646 aa).

The TGS domain occupies 1–63 (MADLSIIFPD…SSGGSIEIIT (63 aa)). Residues 244 to 541 (DHRKLGKELG…LIEEYKGAFP (298 aa)) are catalytic. The Zn(2+) site is built by C337, H388, and H518.

This sequence belongs to the class-II aminoacyl-tRNA synthetase family. As to quaternary structure, homodimer. It depends on Zn(2+) as a cofactor.

It is found in the cytoplasm. It catalyses the reaction tRNA(Thr) + L-threonine + ATP = L-threonyl-tRNA(Thr) + AMP + diphosphate + H(+). Catalyzes the attachment of threonine to tRNA(Thr) in a two-step reaction: L-threonine is first activated by ATP to form Thr-AMP and then transferred to the acceptor end of tRNA(Thr). Also edits incorrectly charged L-seryl-tRNA(Thr). This chain is Threonine--tRNA ligase, found in Oceanobacillus iheyensis (strain DSM 14371 / CIP 107618 / JCM 11309 / KCTC 3954 / HTE831).